A 529-amino-acid chain; its full sequence is MQQRRPVRRALLSVSDKAGIIEFAQALSARGVELLSTGGTARLLAEKGLPVTEVSDYTGFPEMMDGRVKTLHPKVHGGILGRRGQDDAIMEQHHIAPIDMVVVNLYPFAETVAREGCSLEDAVENIDIGGPTMVRSAAKNHKDVAIVVKSSDYDAIIKEMDANEGSLTLDTRFDLAIKAFEHTAAYDSMIANYFGSMVPAYHGESKEAAGRFPRTLNLNFIKKQDMRYGENSHQQAAFYIEENVKEASVATAQQVQGKALSYNNIADTDAALECVKEFNEPACVIVKHANPCGVAVSTSILDAYDRAYKTDPTSAFGGIIAFNRELDAETAQAIISRQFVEVIIAPSASEEALKITAAKQNVRVLTCGQWGERVPGLDFKRVNGGLLVQDRDLGMVSEAELRVVSKRQPTEQELRDALFCWKVAKFVKSNAIVYAKENMTIGIGAGQMSRVYSAKIAGIKAADEGLEVKGSAMASDAFFPFRDGIDAAAAVGVSCVIQPGGSIRDDEVIAAADEHGIAMIFTDMRHFRH.

The 148-residue stretch at 1-148 (MQQRRPVRRA…KNHKDVAIVV (148 aa)) folds into the MGS-like domain.

It belongs to the PurH family.

It catalyses the reaction (6R)-10-formyltetrahydrofolate + 5-amino-1-(5-phospho-beta-D-ribosyl)imidazole-4-carboxamide = 5-formamido-1-(5-phospho-D-ribosyl)imidazole-4-carboxamide + (6S)-5,6,7,8-tetrahydrofolate. The enzyme catalyses IMP + H2O = 5-formamido-1-(5-phospho-D-ribosyl)imidazole-4-carboxamide. Its pathway is purine metabolism; IMP biosynthesis via de novo pathway; 5-formamido-1-(5-phospho-D-ribosyl)imidazole-4-carboxamide from 5-amino-1-(5-phospho-D-ribosyl)imidazole-4-carboxamide (10-formyl THF route): step 1/1. It participates in purine metabolism; IMP biosynthesis via de novo pathway; IMP from 5-formamido-1-(5-phospho-D-ribosyl)imidazole-4-carboxamide: step 1/1. The sequence is that of Bifunctional purine biosynthesis protein PurH from Salmonella paratyphi B (strain ATCC BAA-1250 / SPB7).